Consider the following 384-residue polypeptide: MSEFWVISAPGDKTPQQTYERLQKATMGSGQNLSNCYKFSIPELKVGTLDSLIGLTDDLGKLDTFCEGVCRKVASYMGEVLEDQKDKLSSNLSAGEGTLVNFMHRFQWNMAKYPTKQPIKSLTEILSKVVTQVDTDLRSKSQAYNNLKSSLQNMERKATGSLLLRNLSQIVKKDDFIDGSEYLRTVIVAVPVALFGEWEKNYESLADYVAPKSSRLLTQDEEYGLFATSIFKKVYEEFKYNCSRYKFFVREFNFNEQDSVVRQDQINKIASEKRKMLGPLLRWLKVNFSEVFTAWIHIKALRVFVESVLRYGLPVNFQAVVLDPPKKNRKRLRDVLNNLYCKLDSTGLTNVDAEDSVPGLSLGMQEYYPYVFYKVILDFESRSF.

This sequence belongs to the V-ATPase C subunit family. In terms of assembly, V-ATPase is a heteromultimeric enzyme made up of two complexes: the ATP-hydrolytic V1 complex and the proton translocation V0 complex. The V1 complex consists of three catalytic AB heterodimers that form a heterohexamer, three peripheral stalks each consisting of EG heterodimers, one central rotor including subunits D and F, and the regulatory subunits C and H. The proton translocation complex V0 consists of the proton transport subunit a, a ring of proteolipid subunits c9c'', rotary subunit d, subunits e and f, and the accessory subunits vah-19/Ac45 and vah-20/PRR.

In terms of biological role, subunit of the V1 complex of vacuolar(H+)-ATPase (V-ATPase), a multisubunit enzyme composed of a peripheral complex (V1) that hydrolyzes ATP and a membrane integral complex (V0) that translocates protons. V-ATPase is responsible for acidifying and maintaining the pH of intracellular compartments and in some cell types, is targeted to the plasma membrane, where it is responsible for acidifying the extracellular environment. Subunit C is necessary for the assembly of the catalytic sector of the enzyme and is likely to have a specific function in its catalytic activity. This Ascidia sydneiensis samea (Vanadium-rich ascidian) protein is V-type proton ATPase subunit C 2 (VATC).